We begin with the raw amino-acid sequence, 131 residues long: ATP synthase epsilon chain, chloroplastic (131 aa).

It belongs to the ATPase epsilon chain family. In terms of assembly, F-type ATPases have 2 components, CF(1) - the catalytic core - and CF(0) - the membrane proton channel. CF(1) has five subunits: alpha(3), beta(3), gamma(1), delta(1), epsilon(1). CF(0) has three main subunits: a, b and c.

The protein localises to the plastid. The protein resides in the chloroplast thylakoid membrane. Produces ATP from ADP in the presence of a proton gradient across the membrane. This is ATP synthase epsilon chain, chloroplastic from Oltmannsiellopsis viridis (Marine flagellate).